The sequence spans 632 residues: Threonine--tRNA ligase (632 aa).

Residues 1–61 enclose the TGS domain; the sequence is MPIVTLPDGS…EHDAEVSILT (61 aa). A catalytic region spans residues 242–533; sequence DHRKLARKLD…LIEHYAGSMP (292 aa). Cys333, His384, and His510 together coordinate Zn(2+).

It belongs to the class-II aminoacyl-tRNA synthetase family. As to quaternary structure, homodimer. Zn(2+) serves as cofactor.

Its subcellular location is the cytoplasm. The enzyme catalyses tRNA(Thr) + L-threonine + ATP = L-threonyl-tRNA(Thr) + AMP + diphosphate + H(+). In terms of biological role, catalyzes the attachment of threonine to tRNA(Thr) in a two-step reaction: L-threonine is first activated by ATP to form Thr-AMP and then transferred to the acceptor end of tRNA(Thr). Also edits incorrectly charged L-seryl-tRNA(Thr). This chain is Threonine--tRNA ligase, found in Chromohalobacter salexigens (strain ATCC BAA-138 / DSM 3043 / CIP 106854 / NCIMB 13768 / 1H11).